A 160-amino-acid polypeptide reads, in one-letter code: Cyclic pyranopterin monophosphate synthase (160 aa).

Residues 74–76 (LSH) and 112–113 (ME) each bind substrate. Asp-127 is a catalytic residue.

Belongs to the MoaC family. As to quaternary structure, homohexamer; trimer of dimers.

The catalysed reaction is (8S)-3',8-cyclo-7,8-dihydroguanosine 5'-triphosphate = cyclic pyranopterin phosphate + diphosphate. Its pathway is cofactor biosynthesis; molybdopterin biosynthesis. Catalyzes the conversion of (8S)-3',8-cyclo-7,8-dihydroguanosine 5'-triphosphate to cyclic pyranopterin monophosphate (cPMP). This Trichlorobacter lovleyi (strain ATCC BAA-1151 / DSM 17278 / SZ) (Geobacter lovleyi) protein is Cyclic pyranopterin monophosphate synthase.